The primary structure comprises 1184 residues: Protein stu1 (1184 aa).

HEAT repeat units follow at residues 92 to 130 (FCPV…EHYV) and 162 to 194 (RSYV…FQGA). 2 stretches are compositionally biased toward basic and acidic residues: residues 229–240 (SSTARPRSRVEP) and 308–317 (EAEKAPHMET). Positions 229–336 (SSTARPRSRV…APQPLHAETS (108 aa)) are disordered. The stretch at 463–499 (VTYTPRLLQHVTSACQDKNAQLRLFAAGWLKTLLNKQ) is one HEAT 3 repeat. Disordered regions lie at residues 564–584 (LEKD…SDTL) and 602–906 (ARLA…RVEE). Positions 572–584 (NRDQSSYLSSDTL) are enriched in polar residues. The segment covering 640-649 (APLSSLSSAP) has biased composition (low complexity). Residues 723 to 737 (SASNENETQVATQVA) show a composition bias toward polar residues. Basic and acidic residues-rich tracts occupy residues 787 to 811 (AGRH…ENKL) and 882 to 895 (EQDR…DSAE).

The protein belongs to the CLASP family. Interacts with microtubules.

Its subcellular location is the cytoplasm. The protein localises to the cytoskeleton. It localises to the nucleus. The protein resides in the spindle. In terms of biological role, microtubule binding protein that promotes the stabilization of dynamic microtubules. Required for mitotic spindle formation. This chain is Protein stu1 (stu1), found in Aspergillus oryzae (strain ATCC 42149 / RIB 40) (Yellow koji mold).